The primary structure comprises 245 residues: Probable septum site-determining protein MinC (245 aa).

Residues 113–132 are compositionally biased toward basic and acidic residues; the sequence is RERPLEPLVGEEKKKPEKPP. The segment at 113 to 138 is disordered; sequence RERPLEPLVGEEKKKPEKPPEPTIKP.

It belongs to the MinC family. In terms of assembly, interacts with MinD and FtsZ.

Its function is as follows. Cell division inhibitor that blocks the formation of polar Z ring septums. Rapidly oscillates between the poles of the cell to destabilize FtsZ filaments that have formed before they mature into polar Z rings. Prevents FtsZ polymerization. The protein is Probable septum site-determining protein MinC of Pseudomonas fluorescens (strain SBW25).